The sequence spans 388 residues: 2-methylene-furan-3-one reductase (388 aa).

The N-terminal 60 residues, 1 to 60 (MEALLSSTTLQLKPLHPPSSFSSLHSPFSSISVLRVKGSKKAETFIQRSNFSTVLPLRVS), are a transit peptide targeting the chloroplast. NADP(+) contacts are provided by residues lysine 125, 240-241 (GV), 263-266 (STGK), tyrosine 281, 330-332 (FVV), and 377-378 (RA). Position 125 (lysine 125) interacts with substrate.

The protein belongs to the zinc-containing alcohol dehydrogenase family. Quinone oxidoreductase subfamily. Monomer.

The protein localises to the plastid. It localises to the chloroplast. It catalyses the reaction 4-hydroxy-2,5-dimethyl-furan-3(2H)-one + NADP(+) = 4-hydroxy-5-methyl-2-methylenefuran-3(2H)-one + NADPH + H(+). Functionally, enone oxidoreductase involved in the biosynthesis of 4-hydroxy-2,5-dimethyl-3(2H)-furanone (HDMF or furaneol). Can use both NADH and NADPH as the electron donor. This chain is 2-methylene-furan-3-one reductase (EO), found in Solanum lycopersicum (Tomato).